We begin with the raw amino-acid sequence, 90 residues long: Accessory gland-specific peptide 26Ab (90 aa).

The first 21 residues, 1 to 21 (MNYFAVLCIFSCICLWQFSDA), serve as a signal peptide directing secretion.

As to expression, main cells of the accessory glands of males.

The protein localises to the secreted. Its subcellular location is the extracellular space. In terms of biological role, this protein is transferred from male to female during mating and may affect egglaying and behavior after mating. The protein is Accessory gland-specific peptide 26Ab (Acp26Ab) of Drosophila sechellia (Fruit fly).